A 336-amino-acid chain; its full sequence is D-alanine--D-alanine ligase (336 aa).

Positions 124 to 330 constitute an ATP-grasp domain; the sequence is KMWFSALGVP…FTEYLIDVIG (207 aa). 154 to 209 provides a ligand contact to ATP; that stretch reads AFDNWGSVFVKAASQGSSVGCYKVDVKANIANVLKDAFSYAPYVVVEQTIHARELE. 3 residues coordinate Mg(2+): aspartate 284, glutamate 297, and asparagine 299.

The protein belongs to the D-alanine--D-alanine ligase family. It depends on Mg(2+) as a cofactor. Mn(2+) serves as cofactor.

It localises to the cytoplasm. The enzyme catalyses 2 D-alanine + ATP = D-alanyl-D-alanine + ADP + phosphate + H(+). Its pathway is cell wall biogenesis; peptidoglycan biosynthesis. Functionally, cell wall formation. The sequence is that of D-alanine--D-alanine ligase from Shewanella frigidimarina (strain NCIMB 400).